Reading from the N-terminus, the 168-residue chain is ATP synthase subunit b, chloroplastic (168 aa).

The chain crosses the membrane as a helical span at residues 20–37; that stretch reads LNLAVVLPIVFTLGRDTL.

This sequence belongs to the ATPase B chain family. As to quaternary structure, F-type ATPases have 2 components, F(1) - the catalytic core - and F(0) - the membrane proton channel. F(1) has five subunits: alpha(3), beta(3), gamma(1), delta(1), epsilon(1). F(0) has four main subunits: a(1), b(1), b'(1) and c(10-14). The alpha and beta chains form an alternating ring which encloses part of the gamma chain. F(1) is attached to F(0) by a central stalk formed by the gamma and epsilon chains, while a peripheral stalk is formed by the delta, b and b' chains.

Its subcellular location is the plastid. It localises to the chloroplast thylakoid membrane. In terms of biological role, f(1)F(0) ATP synthase produces ATP from ADP in the presence of a proton or sodium gradient. F-type ATPases consist of two structural domains, F(1) containing the extramembraneous catalytic core and F(0) containing the membrane proton channel, linked together by a central stalk and a peripheral stalk. During catalysis, ATP synthesis in the catalytic domain of F(1) is coupled via a rotary mechanism of the central stalk subunits to proton translocation. Its function is as follows. Component of the F(0) channel, it forms part of the peripheral stalk, linking F(1) to F(0). The chain is ATP synthase subunit b, chloroplastic from Ostreococcus tauri.